A 435-amino-acid chain; its full sequence is 3-phosphoshikimate 1-carboxyvinyltransferase (435 aa).

Positions 15, 16, and 20 each coordinate 3-phosphoshikimate. K15 provides a ligand contact to phosphoenolpyruvate. Phosphoenolpyruvate-binding residues include G96 and R124. 5 residues coordinate 3-phosphoshikimate: S169, Q171, T195, D319, and K346. Q171 contacts phosphoenolpyruvate. D319 (proton acceptor) is an active-site residue. Residues R350 and R394 each coordinate phosphoenolpyruvate.

It belongs to the EPSP synthase family. Monomer.

It localises to the cytoplasm. It catalyses the reaction 3-phosphoshikimate + phosphoenolpyruvate = 5-O-(1-carboxyvinyl)-3-phosphoshikimate + phosphate. It participates in metabolic intermediate biosynthesis; chorismate biosynthesis; chorismate from D-erythrose 4-phosphate and phosphoenolpyruvate: step 6/7. Functionally, catalyzes the transfer of the enolpyruvyl moiety of phosphoenolpyruvate (PEP) to the 5-hydroxyl of shikimate-3-phosphate (S3P) to produce enolpyruvyl shikimate-3-phosphate and inorganic phosphate. The sequence is that of 3-phosphoshikimate 1-carboxyvinyltransferase from Chloroherpeton thalassium (strain ATCC 35110 / GB-78).